A 40-amino-acid polypeptide reads, in one-letter code: Mu-thomitoxin-Hme1b (40 aa).

3 cysteine pairs are disulfide-bonded: cysteine 2–cysteine 18, cysteine 9–cysteine 22, and cysteine 17–cysteine 33.

The protein belongs to the neurotoxin 19 (CSTX) family. Contains 3 disulfide bonds. Expressed by the venom gland.

The protein resides in the secreted. Its function is as follows. Blocks the Nav1.2/SCN2A, Nav1.4/SCN4A, Nav1.5/SCN5A and Nav1.6/SCN8A sodium channels. Shows a slight preference for the Nav1.2 and Nav1.4 channels. Reduces the peak amplitude of the sodium current and negatively shifts the steady-state inactivation process. Does not shift the threshold potential of activation or the voltage corresponding to maximal current. Does not change the reversal potential of the sodium current. May act on site 1 of the receptor. This is Mu-thomitoxin-Hme1b from Heriaeus mellotteei (Crab spider).